Reading from the N-terminus, the 27-residue chain is Metallothionein-like protein CAP5 (27 aa).

The segment covering 1-18 (MAPCSCKSCGTSCAGSCT) has biased composition (low complexity). Positions 1–27 (MAPCSCKSCGTSCAGSCTSCSCGSCSH) are disordered. Cu(+) contacts are provided by cysteine 4, cysteine 6, cysteine 9, cysteine 13, cysteine 20, cysteine 22, and cysteine 25.

This sequence belongs to the metallothionein superfamily. Type 8 family.

This chain is Metallothionein-like protein CAP5 (CAP5), found in Colletotrichum gloeosporioides (Anthracnose fungus).